A 206-amino-acid chain; its full sequence is Large ribosomal subunit protein uL4 (206 aa).

The disordered stretch occupies residues Arg-45–Gln-75. Over residues Gly-60 to Gly-71 the composition is skewed to basic residues.

It belongs to the universal ribosomal protein uL4 family. Part of the 50S ribosomal subunit.

One of the primary rRNA binding proteins, this protein initially binds near the 5'-end of the 23S rRNA. It is important during the early stages of 50S assembly. It makes multiple contacts with different domains of the 23S rRNA in the assembled 50S subunit and ribosome. Functionally, forms part of the polypeptide exit tunnel. The protein is Large ribosomal subunit protein uL4 of Thermoanaerobacter pseudethanolicus (strain ATCC 33223 / 39E) (Clostridium thermohydrosulfuricum).